Here is a 234-residue protein sequence, read N- to C-terminus: Triosephosphate isomerase (234 aa).

8 to 10 (NFK) contributes to the substrate binding site. His-90 (electrophile) is an active-site residue. Glu-159 (proton acceptor) is an active-site residue. The substrate site is built by Gly-165 and Ser-197.

This sequence belongs to the triosephosphate isomerase family. Homodimer.

The protein resides in the cytoplasm. The catalysed reaction is D-glyceraldehyde 3-phosphate = dihydroxyacetone phosphate. Its pathway is carbohydrate biosynthesis; gluconeogenesis. The protein operates within carbohydrate degradation; glycolysis; D-glyceraldehyde 3-phosphate from glycerone phosphate: step 1/1. Functionally, involved in the gluconeogenesis. Catalyzes stereospecifically the conversion of dihydroxyacetone phosphate (DHAP) to D-glyceraldehyde-3-phosphate (G3P). The chain is Triosephosphate isomerase from Helicobacter pylori (strain J99 / ATCC 700824) (Campylobacter pylori J99).